A 333-amino-acid chain; its full sequence is Acetoin:2,6-dichlorophenolindophenol oxidoreductase subunit alpha (333 aa).

In terms of assembly, tetramer of 2 alpha and 2 beta subunits. Thiamine diphosphate serves as cofactor.

Its pathway is ketone degradation; acetoin degradation. Catalyzes the 2,6-dichlorophenolindophenol-dependent cleavage of acetoin into acetate and acetaldehyde. The alpha subunit is probably the catalytic subunit of the enzyme. The protein is Acetoin:2,6-dichlorophenolindophenol oxidoreductase subunit alpha (acoA) of Bacillus subtilis (strain 168).